The following is a 238-amino-acid chain: RNA pyrophosphohydrolase (238 aa).

In terms of domain architecture, Nudix hydrolase spans 6-149 (GFRPNVGIIL…KREVYQMALS (144 aa)). Positions 38 to 59 (GGIKYGETPEQAMYRELHEEVG) match the Nudix box motif. The tract at residues 161–238 (APLSPYGRGG…PDDTPSKDSL (78 aa)) is disordered. The segment covering 171-181 (PHRERDGRDNR) has biased composition (basic and acidic residues). The span at 188-199 (RNDQNTRGQRQP) shows a compositional bias: polar residues. Residues 204–217 (VTTSTVIVETVITS) are compositionally biased toward low complexity.

The protein belongs to the Nudix hydrolase family. RppH subfamily. It depends on a divalent metal cation as a cofactor.

Functionally, accelerates the degradation of transcripts by removing pyrophosphate from the 5'-end of triphosphorylated RNA, leading to a more labile monophosphorylated state that can stimulate subsequent ribonuclease cleavage. This chain is RNA pyrophosphohydrolase, found in Ralstonia nicotianae (strain ATCC BAA-1114 / GMI1000) (Ralstonia solanacearum).